A 126-amino-acid chain; its full sequence is Fluoride-specific ion channel FluC (126 aa).

4 consecutive transmembrane segments (helical) span residues 2 to 22 (LTFAPLNFLAIGVGATLGAWL), 37 to 57 (WGTLTANLVGGYLIGVMVALI), 65 to 85 (AWIRLAAVTGFLGGLTTFSTF), and 101 to 121 (AAAYAGASLAGSLAMTGLATV). Na(+) is bound by residues glycine 77 and threonine 80.

It belongs to the fluoride channel Fluc/FEX (TC 1.A.43) family.

The protein resides in the cell inner membrane. The enzyme catalyses fluoride(in) = fluoride(out). Na(+) is not transported, but it plays an essential structural role and its presence is essential for fluoride channel function. Functionally, fluoride-specific ion channel. Important for reducing fluoride concentration in the cell, thus reducing its toxicity. The sequence is that of Fluoride-specific ion channel FluC from Bordetella parapertussis (strain 12822 / ATCC BAA-587 / NCTC 13253).